A 108-amino-acid chain; its full sequence is Insertion element IS629 uncharacterized 12 kDa protein S4062 (108 aa).

The protein belongs to the transposase 8 family.

The protein is Insertion element IS629 uncharacterized 12 kDa protein S4062 of Shigella flexneri.